Consider the following 176-residue polypeptide: Inorganic pyrophosphatase (176 aa).

Positions 31, 45, and 57 each coordinate substrate. Residues D67, D72, and D104 each coordinate Mg(2+). Y141 is a substrate binding site.

Belongs to the PPase family. Homohexamer. Mg(2+) serves as cofactor.

The protein resides in the cytoplasm. It catalyses the reaction diphosphate + H2O = 2 phosphate + H(+). Its function is as follows. Catalyzes the hydrolysis of inorganic pyrophosphate (PPi) forming two phosphate ions. The chain is Inorganic pyrophosphatase from Methanopyrus kandleri (strain AV19 / DSM 6324 / JCM 9639 / NBRC 100938).